We begin with the raw amino-acid sequence, 263 residues long: uncharacterized protein (263 aa).

31–38 (GPTGSGKT) is an ATP binding site.

Belongs to the CbbQ/NirQ/NorQ/GpvN family.

This is an uncharacterized protein from Staphylococcus saprophyticus subsp. saprophyticus (strain ATCC 15305 / DSM 20229 / NCIMB 8711 / NCTC 7292 / S-41).